We begin with the raw amino-acid sequence, 120 residues long: T-cell receptor beta chain V region PHDS203 (120 aa).

A signal peptide spans 1-11 (VVLCFLGTGLV). Residues 12-106 (DMKVTQMSRY…TSVYFCAQGA (95 aa)) are v segment. Residues Cys34 and Cys102 are joined by a disulfide bond. The segment at 107 to 120 (PEQYFGPGTRLTVL) is j segment.

This chain is T-cell receptor beta chain V region PHDS203, found in Mus musculus (Mouse).